The primary structure comprises 352 residues: MKIAVLGAGAWGTALAVNAARAAGAGVTRHQVTLWARNAAQVQALQAERANTRYLPGIALPASLLLQGGGEASLGQAVSGQDLIILATPVSAARSMLTQLKHAAVPVAWLSKGFEAAVFAEPASASLAKPFGLMVHEVRAQVAPDLRAGVFSGPSFALEVARGQPTALVAASEHAEVREALVAAFHGASLRVYASDDMVGVEVGGAVKNVMAIAAGLCDGLQLGLNARAALITRGLAEITRLGVALGARAETFTGLSGLGDLVLTATGDLSRNRKVGLLLAQGKTLAEVLESLGHVAEGVYCARTVVQRAASLGVDMPIAQSVVALLDGKLKASEAVALLMEREPKTELDCY.

3 residues coordinate NADPH: W11, R37, and K112. Residues K112, G153, and S155 each contribute to the sn-glycerol 3-phosphate site. A157 provides a ligand contact to NADPH. Positions 208, 261, 271, 272, and 273 each coordinate sn-glycerol 3-phosphate. The Proton acceptor role is filled by K208. R272 provides a ligand contact to NADPH. NADPH contacts are provided by V296 and E298.

It belongs to the NAD-dependent glycerol-3-phosphate dehydrogenase family.

The protein localises to the cytoplasm. It catalyses the reaction sn-glycerol 3-phosphate + NAD(+) = dihydroxyacetone phosphate + NADH + H(+). The catalysed reaction is sn-glycerol 3-phosphate + NADP(+) = dihydroxyacetone phosphate + NADPH + H(+). It participates in membrane lipid metabolism; glycerophospholipid metabolism. Its function is as follows. Catalyzes the reduction of the glycolytic intermediate dihydroxyacetone phosphate (DHAP) to sn-glycerol 3-phosphate (G3P), the key precursor for phospholipid synthesis. The sequence is that of Glycerol-3-phosphate dehydrogenase [NAD(P)+] from Polaromonas naphthalenivorans (strain CJ2).